Reading from the N-terminus, the 79-residue chain is Small ribosomal subunit protein bS18B (79 aa).

Residues Met1–Pro11 are compositionally biased toward basic and acidic residues. A disordered region spans residues Met1–Val24.

The protein belongs to the bacterial ribosomal protein bS18 family. In terms of assembly, part of the 30S ribosomal subunit. Forms a tight heterodimer with protein bS6.

In terms of biological role, binds as a heterodimer with protein bS6 to the central domain of the 16S rRNA, where it helps stabilize the platform of the 30S subunit. In Streptomyces coelicolor (strain ATCC BAA-471 / A3(2) / M145), this protein is Small ribosomal subunit protein bS18B.